Here is a 514-residue protein sequence, read N- to C-terminus: ATP synthase subunit alpha (514 aa).

Residue 170–177 (GDRQIGKT) participates in ATP binding.

Belongs to the ATPase alpha/beta chains family. F-type ATPases have 2 components, CF(1) - the catalytic core - and CF(0) - the membrane proton channel. CF(1) has five subunits: alpha(3), beta(3), gamma(1), delta(1), epsilon(1). CF(0) has three main subunits: a(1), b(2) and c(9-12). The alpha and beta chains form an alternating ring which encloses part of the gamma chain. CF(1) is attached to CF(0) by a central stalk formed by the gamma and epsilon chains, while a peripheral stalk is formed by the delta and b chains.

The protein resides in the cell inner membrane. The enzyme catalyses ATP + H2O + 4 H(+)(in) = ADP + phosphate + 5 H(+)(out). Functionally, produces ATP from ADP in the presence of a proton gradient across the membrane. The alpha chain is a regulatory subunit. This is ATP synthase subunit alpha from Pseudomonas putida (strain GB-1).